The primary structure comprises 358 residues: Biotin synthase (358 aa).

Residues 55–278 (NKVRIHILDN…VNPDSEIRIA (224 aa)) form the Radical SAM core domain. Cysteine 70, cysteine 74, and cysteine 77 together coordinate [4Fe-4S] cluster. The [2Fe-2S] cluster site is built by cysteine 114, cysteine 146, cysteine 206, and arginine 276.

This sequence belongs to the radical SAM superfamily. Biotin synthase family. Homodimer. It depends on [4Fe-4S] cluster as a cofactor. The cofactor is [2Fe-2S] cluster.

It carries out the reaction (4R,5S)-dethiobiotin + (sulfur carrier)-SH + 2 reduced [2Fe-2S]-[ferredoxin] + 2 S-adenosyl-L-methionine = (sulfur carrier)-H + biotin + 2 5'-deoxyadenosine + 2 L-methionine + 2 oxidized [2Fe-2S]-[ferredoxin]. It functions in the pathway cofactor biosynthesis; biotin biosynthesis; biotin from 7,8-diaminononanoate: step 2/2. In terms of biological role, catalyzes the conversion of dethiobiotin (DTB) to biotin by the insertion of a sulfur atom into dethiobiotin via a radical-based mechanism. The polypeptide is Biotin synthase (Leptospira borgpetersenii serovar Hardjo-bovis (strain JB197)).